The following is a 352-amino-acid chain: UDP-N-acetylglucosamine--N-acetylmuramyl-(pentapeptide) pyrophosphoryl-undecaprenol N-acetylglucosamine transferase (352 aa).

Residues 11–13, Asn120, Arg161, Ser188, and Gln286 contribute to the UDP-N-acetyl-alpha-D-glucosamine site; that span reads TGG.

This sequence belongs to the glycosyltransferase 28 family. MurG subfamily.

Its subcellular location is the cell inner membrane. The enzyme catalyses di-trans,octa-cis-undecaprenyl diphospho-N-acetyl-alpha-D-muramoyl-L-alanyl-D-glutamyl-meso-2,6-diaminopimeloyl-D-alanyl-D-alanine + UDP-N-acetyl-alpha-D-glucosamine = di-trans,octa-cis-undecaprenyl diphospho-[N-acetyl-alpha-D-glucosaminyl-(1-&gt;4)]-N-acetyl-alpha-D-muramoyl-L-alanyl-D-glutamyl-meso-2,6-diaminopimeloyl-D-alanyl-D-alanine + UDP + H(+). Its pathway is cell wall biogenesis; peptidoglycan biosynthesis. Its function is as follows. Cell wall formation. Catalyzes the transfer of a GlcNAc subunit on undecaprenyl-pyrophosphoryl-MurNAc-pentapeptide (lipid intermediate I) to form undecaprenyl-pyrophosphoryl-MurNAc-(pentapeptide)GlcNAc (lipid intermediate II). The polypeptide is UDP-N-acetylglucosamine--N-acetylmuramyl-(pentapeptide) pyrophosphoryl-undecaprenol N-acetylglucosamine transferase (Prochlorococcus marinus (strain NATL1A)).